A 329-amino-acid chain; its full sequence is Aspartate--ammonia ligase (329 aa).

The protein belongs to the class-II aminoacyl-tRNA synthetase family. AsnA subfamily.

The protein resides in the cytoplasm. It carries out the reaction L-aspartate + NH4(+) + ATP = L-asparagine + AMP + diphosphate + H(+). The protein operates within amino-acid biosynthesis; L-asparagine biosynthesis; L-asparagine from L-aspartate (ammonia route): step 1/1. This is Aspartate--ammonia ligase from Ureaplasma urealyticum serovar 10 (strain ATCC 33699 / Western).